Reading from the N-terminus, the 451-residue chain is UDP-N-acetylmuramoylalanine--D-glutamate ligase (451 aa).

120 to 126 (GSNGKTT) serves as a coordination point for ATP.

This sequence belongs to the MurCDEF family.

It localises to the cytoplasm. It carries out the reaction UDP-N-acetyl-alpha-D-muramoyl-L-alanine + D-glutamate + ATP = UDP-N-acetyl-alpha-D-muramoyl-L-alanyl-D-glutamate + ADP + phosphate + H(+). Its pathway is cell wall biogenesis; peptidoglycan biosynthesis. Cell wall formation. Catalyzes the addition of glutamate to the nucleotide precursor UDP-N-acetylmuramoyl-L-alanine (UMA). In Bacillus pumilus (strain SAFR-032), this protein is UDP-N-acetylmuramoylalanine--D-glutamate ligase.